Consider the following 1784-residue polypeptide: Protein mel-28 (1784 aa).

The segment at 1–956 is required for nuclear envelope and kinetochore localization; the sequence is MDNENSSIFK…QNDDEDMPEV (956 aa). Positions 566-778 are required for association with mitotic chromosomes; sequence GKIEEFCQLA…TSPEDSEHSE (213 aa). Residues 846–1071 are important for nuclear localization; it reads APMTVTIGKH…HNSILKTAKG (226 aa). 2 disordered regions span residues 945 to 994 and 1115 to 1784; these read KVQN…AKRI and ETMT…RAKQ. Residues 1126-1149 show a composition bias toward basic and acidic residues; that stretch reads GKHDEEKDSEKNVVDEMEEVKDQE. 2 stretches are compositionally biased toward acidic residues: residues 1222-1232 and 1266-1278; these read LEEEGEDEDIW and VNEE…EEVQ. Residues 1239–1601 form a chromatin binding region; it reads FEVQMDEDCE…TTVDPSSSAL (363 aa). Basic and acidic residues predominate over residues 1279 to 1293; that stretch reads QDAKEPEKTEKRQEE. The segment covering 1297-1306 has biased composition (low complexity); sequence EVMQPVIPEE. Acidic residues predominate over residues 1321-1336; it reads ELQEEPDIVPTGDEDT. The segment covering 1337-1351 has biased composition (basic and acidic residues); it reads ADKVQEQAVEEDRPP. The segment covering 1352–1366 has biased composition (polar residues); that stretch reads SRNTRSSSVQKSTSQ. Residues 1367–1382 are compositionally biased toward basic and acidic residues; it reads VEDRDPKELVEEERPP. The span at 1383–1398 shows a compositional bias: polar residues; it reads SRNTRSASVQKSSNQE. Over residues 1428 to 1444 the composition is skewed to basic and acidic residues; the sequence is KVKDQKPEELIEEDRPP. Residues 1445 to 1459 show a composition bias toward polar residues; sequence SRNTRSASAQKTVAA. Residues 1533-1546 are compositionally biased toward low complexity; sequence AAASTSSSRAGSVT. The span at 1566 to 1576 shows a compositional bias: acidic residues; sequence VQEEEEEEAEE. Residues 1581-1606 are compositionally biased toward polar residues; the sequence is SRSTRSASVKNTTVDPSSSALASTKR. The segment at 1601–1784 is important for nuclear localization; that stretch reads LASTKRTTSR…LLRSARRAKQ (184 aa). The segment at residues 1630-1642 is a DNA-binding region (a.T hook 1); sequence TPKRGRPAKKDAG. A required for chromosome segregation, nuclear growth, nucleoplasmic accumulation and cell cycle timing, but not required for nuclear envelope and kinetochore localization region spans residues 1630–1784; the sequence is TPKRGRPAKK…LLRSARRAKQ (155 aa). Polar residues predominate over residues 1716–1735; it reads AGTSKQSRSVTRSRASSIDV. Residues 1746–1758 constitute a DNA-binding region (a.T hook 2); that stretch reads KRGRGRPPKTVLE.

As to expression, ubiquitously expressed (at protein level).

It localises to the nucleus. It is found in the nucleoplasm. The protein localises to the nucleus envelope. Its subcellular location is the nucleus inner membrane. The protein resides in the nuclear pore complex. It localises to the chromosome. It is found in the centromere. The protein localises to the kinetochore. In terms of biological role, nuclear envelope protein which has essential roles in assembly of nuclear pore complexes and in chromatin maintenance during the cell cycle. Appears to be a stable structural component of the nuclear envelope during interphase. In dividing cells, localizes to kinetochores during early stages of mitosis and then to chromatin during late mitosis. Important for several mitotic processes including chromosome condensation, kinetochore assembly, chromosome segregation and cell-cycle timing. In postmitotic cells, plays a role in the early steps of nuclear pore complex assembly by recruiting the nucleoporins npp-10 and npp-5 to chromatin. Also involved in meiotic chromosome segregation. May function downstream of the Ran GTPase signaling pathway. In Caenorhabditis elegans, this protein is Protein mel-28.